We begin with the raw amino-acid sequence, 211 residues long: Uridine kinase (211 aa).

15–22 serves as a coordination point for ATP; that stretch reads GGSGSGKT.

The protein belongs to the uridine kinase family.

The protein resides in the cytoplasm. The catalysed reaction is uridine + ATP = UMP + ADP + H(+). It carries out the reaction cytidine + ATP = CMP + ADP + H(+). The protein operates within pyrimidine metabolism; CTP biosynthesis via salvage pathway; CTP from cytidine: step 1/3. It functions in the pathway pyrimidine metabolism; UMP biosynthesis via salvage pathway; UMP from uridine: step 1/1. The chain is Uridine kinase from Latilactobacillus sakei subsp. sakei (strain 23K) (Lactobacillus sakei subsp. sakei).